The sequence spans 332 residues: Glycerol-3-phosphate dehydrogenase [NAD(P)+] (332 aa).

Residues Ser10, Trp11, Lys31, and Lys105 each coordinate NADPH. Positions 105, 136, and 138 each coordinate sn-glycerol 3-phosphate. Position 140 (Ala140) interacts with NADPH. Residues Lys191, Asp244, Ser254, Arg255, and Asn256 each coordinate sn-glycerol 3-phosphate. Lys191 serves as the catalytic Proton acceptor. Arg255 serves as a coordination point for NADPH. Residues Val279 and Glu281 each coordinate NADPH.

Belongs to the NAD-dependent glycerol-3-phosphate dehydrogenase family.

The protein localises to the cytoplasm. It catalyses the reaction sn-glycerol 3-phosphate + NAD(+) = dihydroxyacetone phosphate + NADH + H(+). It carries out the reaction sn-glycerol 3-phosphate + NADP(+) = dihydroxyacetone phosphate + NADPH + H(+). The protein operates within membrane lipid metabolism; glycerophospholipid metabolism. In terms of biological role, catalyzes the reduction of the glycolytic intermediate dihydroxyacetone phosphate (DHAP) to sn-glycerol 3-phosphate (G3P), the key precursor for phospholipid synthesis. This Anaeromyxobacter sp. (strain K) protein is Glycerol-3-phosphate dehydrogenase [NAD(P)+].